The primary structure comprises 813 residues: Receptor-like protein 48 (813 aa).

The N-terminal stretch at 1-30 (MHSCSERRMMTVIWSLCLIFCLSNSILAIA) is a signal peptide. The Extracellular segment spans residues 31–786 (KDLCLPDQRD…EDEEKEEKNQ (756 aa)). Residues asparagine 69, asparagine 105, and asparagine 123 are each glycosylated (N-linked (GlcNAc...) asparagine). LRR repeat units lie at residues 111-134 (LQHLQSLELSSNNISGILPDSIGN), 136-159 (KYLRSLSFRTCHLFGKIPSSLGSL), and 160-182 (SYLTHLDLSYNDFTSEGPDSGGN). N-linked (GlcNAc...) asparagine glycosylation is found at asparagine 195 and asparagine 216. LRR repeat units lie at residues 196 to 219 (LSSVTWIDLGSNQLKGMLPSNMSS), 220 to 244 (LSKLVSFDISENSFSGSIPSSLFMI), 245 to 260 (PSLNFSGPLEIGNISS), 261 to 285 (HSELGYLYMGENNFNGPIPGSLSKL), 288 to 310 (LRDLSLSFWNTGRGIVDFSIFLH), 311 to 335 (LKSLCSLDLSYLNTRSMVDLSFFSH), 336 to 359 (LMSLDELDLSGINLKISSTLSFPS), 361 to 381 (TGTLILASCNIVEFPKFLENQ), 382 to 405 (TSLFYLDISANHIEGQVPEWLWRL), 406 to 432 (PTLSFVNIAQNSFSGELPMLPNSIYSF), 434 to 450 (ASDNQFSGEIPRTVCEL), 451 to 473 (VSLNTLVLSNNKFSGSIPRCFEN), 475 to 498 (KTISILHLRNNSLSGVFPKEIISE), 500 to 521 (LTSLDVGHNWLSGQLPKSLIKC), 523 to 544 (DLEFLNVEDNRINDKFPFWLRS), 545 to 571 (LSNLQILVLRSNEFYGPIFSLEDSLSF), 572 to 595 (PKLRIFDISENHFTGVLPSDYFAG), 642 to 666 (FTIYKTIDVSGNRLEGDIPESIGIL), 667 to 690 (KELIVLNMSNNAFTGHIPPSLSNL), 691 to 714 (SNLQSLDLSQNRLSGSIPPELGKL), and 716 to 739 (FLEWMNFSYNRLEGPIPQATQIQS). N-linked (GlcNAc...) asparagine glycosylation is found at asparagine 248 and asparagine 257. Asparagine 380 carries N-linked (GlcNAc...) asparagine glycosylation. N-linked (GlcNAc...) asparagine glycosylation is present at asparagine 484. Asparagine 673 and asparagine 689 each carry an N-linked (GlcNAc...) asparagine glycan. Residues asparagine 721 and asparagine 741 are each glycosylated (N-linked (GlcNAc...) asparagine). Residues 756–785 (FLNKCGGEEEEEEEATKQEEDEDEEKEEKN) are disordered. Residues 763 to 781 (EEEEEEEATKQEEDEDEEK) are compositionally biased toward acidic residues. A helical membrane pass occupies residues 787-807 (VFSWIAAAIGYVPGVFCGLTI). Topologically, residues 808–813 (AHILTS) are cytoplasmic.

This sequence belongs to the RLP family.

Its subcellular location is the cell membrane. In terms of biological role, plays a role in root hair development. This Arabidopsis thaliana (Mouse-ear cress) protein is Receptor-like protein 48.